Consider the following 292-residue polypeptide: 33 kDa chaperonin (292 aa).

2 disulfides stabilise this stretch: Cys-230–Cys-232 and Cys-263–Cys-266.

It belongs to the HSP33 family. In terms of processing, under oxidizing conditions two disulfide bonds are formed involving the reactive cysteines. Under reducing conditions zinc is bound to the reactive cysteines and the protein is inactive.

The protein localises to the cytoplasm. Its function is as follows. Redox regulated molecular chaperone. Protects both thermally unfolding and oxidatively damaged proteins from irreversible aggregation. Plays an important role in the bacterial defense system toward oxidative stress. The sequence is that of 33 kDa chaperonin from Salmonella paratyphi A (strain ATCC 9150 / SARB42).